The sequence spans 306 residues: Ribonuclease Z (306 aa).

7 residues coordinate Zn(2+): H63, H65, D67, H68, H141, D211, and H269. D67 (proton acceptor) is an active-site residue.

It belongs to the RNase Z family. Homodimer. The cofactor is Zn(2+).

It catalyses the reaction Endonucleolytic cleavage of RNA, removing extra 3' nucleotides from tRNA precursor, generating 3' termini of tRNAs. A 3'-hydroxy group is left at the tRNA terminus and a 5'-phosphoryl group is left at the trailer molecule.. In terms of biological role, zinc phosphodiesterase, which displays some tRNA 3'-processing endonuclease activity. Probably involved in tRNA maturation, by removing a 3'-trailer from precursor tRNA. This is Ribonuclease Z from Staphylococcus carnosus (strain TM300).